The following is a 231-amino-acid chain: MAKKLSKNQQKVRALFDANQAYDLHEAIELAKKTSYTKFDASVDLAFKLNLDVRKADQQLRGSVLLPKGTGKDVKVLVVTNNPEKQKLATEAKADFVLDAAAFEQKLKEDDYNFDVIVADPAMMPILGKYGKKLGPKGLMPNPKTGTVTPTPEKAVEELKKGKANYRTDKAGVVHSLIGKVSMPTESLVENAQTLISLIKKLKPAAVKGTYMQNLTVSSSMGPGIKIKLEK.

Belongs to the universal ribosomal protein uL1 family. In terms of assembly, part of the 50S ribosomal subunit.

Functionally, binds directly to 23S rRNA. The L1 stalk is quite mobile in the ribosome, and is involved in E site tRNA release. Protein L1 is also a translational repressor protein, it controls the translation of the L11 operon by binding to its mRNA. The polypeptide is Large ribosomal subunit protein uL1 (Mycoplasmopsis synoviae (strain 53) (Mycoplasma synoviae)).